The primary structure comprises 205 residues: Auxin-responsive protein IAA8 (205 aa).

The tract at residues 1–48 is disordered; the sequence is MECMASTEESLPASSSMDSCSGELPTTTTTAPAQSTASSGCRPPATAA. A compositionally biased stretch (polar residues) spans 7–19; it reads TEESLPASSSMDS. Positions 25 to 39 are enriched in low complexity; sequence PTTTTTAPAQSTASS. The EAR-like (transcriptional repression) motif lies at 58–62; that stretch reads LRLGL. The interval 71–98 is disordered; it reads DGNNPSTPRSSLTTATVTADRGGGGGGH. The span at 73-87 shows a compositional bias: polar residues; the sequence is NNPSTPRSSLTTATV. Residues 103-199 enclose the PB1 domain; sequence SLFVKVYMEG…KRLRIARADD (97 aa).

The protein belongs to the Aux/IAA family. Homodimers and heterodimers. As to expression, highly expressed in green shoots. Expressed in flowers.

The protein resides in the nucleus. Functionally, aux/IAA proteins are short-lived transcriptional factors that function as repressors of early auxin response genes at low auxin concentrations. The polypeptide is Auxin-responsive protein IAA8 (IAA8) (Oryza sativa subsp. japonica (Rice)).